The sequence spans 645 residues: Acetyl-coenzyme A synthetase (645 aa).

CoA contacts are provided by residues 190 to 193 and T308; that span reads RGGR. Residues 384–386, 408–413, D497, and R512 contribute to the ATP site; these read GEP and DTWWQT. S520 is a CoA binding site. R523 lines the ATP pocket. Positions 534, 536, and 539 each coordinate Mg(2+). K606 bears the N6-acetyllysine mark.

This sequence belongs to the ATP-dependent AMP-binding enzyme family. Mg(2+) serves as cofactor. Post-translationally, acetylated. Deacetylation by the SIR2-homolog deacetylase activates the enzyme.

The enzyme catalyses acetate + ATP + CoA = acetyl-CoA + AMP + diphosphate. Its function is as follows. Catalyzes the conversion of acetate into acetyl-CoA (AcCoA), an essential intermediate at the junction of anabolic and catabolic pathways. AcsA undergoes a two-step reaction. In the first half reaction, AcsA combines acetate with ATP to form acetyl-adenylate (AcAMP) intermediate. In the second half reaction, it can then transfer the acetyl group from AcAMP to the sulfhydryl group of CoA, forming the product AcCoA. The protein is Acetyl-coenzyme A synthetase of Halorhodospira halophila (strain DSM 244 / SL1) (Ectothiorhodospira halophila (strain DSM 244 / SL1)).